Consider the following 89-residue polypeptide: UPF0298 protein GTNG_0961 (89 aa).

This sequence belongs to the UPF0298 family.

It is found in the cytoplasm. The polypeptide is UPF0298 protein GTNG_0961 (Geobacillus thermodenitrificans (strain NG80-2)).